Consider the following 372-residue polypeptide: Germination protease (372 aa).

Positions Met-1–Asp-15 are excised as a propeptide.

This sequence belongs to the peptidase A25 family. Homotetramer. Autoproteolytically processed. The inactive tetrameric zymogen termed p46 autoprocesses to a smaller form termed p41, which is active only during spore germination.

The catalysed reaction is Endopeptidase action with P4 Glu or Asp, P1 preferably Glu &gt; Asp, P1' hydrophobic and P2' Ala.. Initiates the rapid degradation of small, acid-soluble proteins during spore germination. This Halalkalibacterium halodurans (strain ATCC BAA-125 / DSM 18197 / FERM 7344 / JCM 9153 / C-125) (Bacillus halodurans) protein is Germination protease.